The primary structure comprises 636 residues: 1-deoxy-D-xylulose-5-phosphate synthase (636 aa).

Residues histidine 77 and 118–120 (GHS) each bind thiamine diphosphate. Aspartate 149 provides a ligand contact to Mg(2+). Residues 150-151 (GA), asparagine 178, tyrosine 290, and glutamate 375 contribute to the thiamine diphosphate site. Position 178 (asparagine 178) interacts with Mg(2+).

The protein belongs to the transketolase family. DXPS subfamily. In terms of assembly, homodimer. Requires Mg(2+) as cofactor. Thiamine diphosphate serves as cofactor.

The enzyme catalyses D-glyceraldehyde 3-phosphate + pyruvate + H(+) = 1-deoxy-D-xylulose 5-phosphate + CO2. It participates in metabolic intermediate biosynthesis; 1-deoxy-D-xylulose 5-phosphate biosynthesis; 1-deoxy-D-xylulose 5-phosphate from D-glyceraldehyde 3-phosphate and pyruvate: step 1/1. In terms of biological role, catalyzes the acyloin condensation reaction between C atoms 2 and 3 of pyruvate and glyceraldehyde 3-phosphate to yield 1-deoxy-D-xylulose-5-phosphate (DXP). The sequence is that of 1-deoxy-D-xylulose-5-phosphate synthase from Cytophaga hutchinsonii (strain ATCC 33406 / DSM 1761 / CIP 103989 / NBRC 15051 / NCIMB 9469 / D465).